We begin with the raw amino-acid sequence, 619 residues long: Replication restart protein PriA (619 aa).

Residues 119–285 (LKELQKHPAS…KDKALVRLKG (167 aa)) form the Helicase ATP-binding domain. 132-139 (GDTGSGKT) is a binding site for ATP. The short motif at 228–231 (DEEH) is the DEAH box element. Residues cysteine 336, cysteine 339, cysteine 345, cysteine 348, cysteine 363, cysteine 366, cysteine 376, and cysteine 379 each contribute to the Zn(2+) site. The Helicase C-terminal domain maps to 371 to 532 (PIPKICNACQ…ELYPPFSRLC (162 aa)).

It belongs to the helicase family. PriA subfamily. In terms of assembly, component of the replication restart primosome. The cofactor is Zn(2+).

The catalysed reaction is Couples ATP hydrolysis with the unwinding of duplex DNA by translocating in the 3'-5' direction.. It catalyses the reaction ATP + H2O = ADP + phosphate + H(+). Its function is as follows. Initiates the restart of stalled replication forks, which reloads the replicative helicase on sites other than the origin of replication. Recognizes and binds to abandoned replication forks and remodels them to uncover a helicase loading site. Promotes assembly of the primosome at these replication forks. This is Replication restart protein PriA from Helicobacter pylori (strain J99 / ATCC 700824) (Campylobacter pylori J99).